Consider the following 534-residue polypeptide: MTKYIFVTGGVVSSIGKGIVAASLGRLLKNRGLKVTIQKFDPYINIDPGTMSPYQHGEVYVTDDGVETDLDLGHYERFIDINLNKYSNVTTGKIYSEVLRKERKGEYLGATVQVIPHITDALKDKIKRAATTTDSDVVITEVGGTVGDIESLPFLEALRQMKADVGSDNVMYIHTTLLPYLKAAGEMKTKPTQHSVKELRGLGIQPNMLVIRTEEPAGQGIKNKLAQFCDVAPEAVIESLDVEHIYQVPLNMQAQGMDQIVCDHLKLNAPAADMTEWSAMVDKVLNLKKTTKIALVGKYVELHDAYLSVVEALKHSGLANDTAIDIDWVNANDLTAENVASRLADADGIIVPGGFGQRGTEGKIQAIRYARENDVPMLGVCLGMQLTCIEFARHVLHLDGANSAELDPETQYPIIDIMRDQIDIEDMGGTLRLGLYPCKLKPGSKAAAAYGNQEVVQRRHRHRYEFNTKFREQFEAEGFVFSGVSPDNRLMEVVELPDKKFFVAAQYHPEYHSRPNHAEELYSAFVTAAVENAK.

Residues 1–267 are amidoligase domain; it reads MTKYIFVTGG…DQIVCDHLKL (267 aa). Residue S13 participates in CTP binding. S13 lines the UTP pocket. 14-19 provides a ligand contact to ATP; it reads SIGKGI. Position 54 (Y54) interacts with L-glutamine. D71 serves as a coordination point for ATP. Mg(2+)-binding residues include D71 and E141. Residues 148–150, 188–193, and K224 each bind CTP; these read DIE and KTKPTQ. UTP contacts are provided by residues 188-193 and K224; that span reads KTKPTQ. Positions 292–534 constitute a Glutamine amidotransferase type-1 domain; that stretch reads KIALVGKYVE…FVTAAVENAK (243 aa). Position 354 (G354) interacts with L-glutamine. Residue C381 is the Nucleophile; for glutamine hydrolysis of the active site. Residues 382–385, E405, and R463 each bind L-glutamine; that span reads LGMQ. Active-site residues include H508 and E510.

This sequence belongs to the CTP synthase family. As to quaternary structure, homotetramer.

It carries out the reaction UTP + L-glutamine + ATP + H2O = CTP + L-glutamate + ADP + phosphate + 2 H(+). It catalyses the reaction L-glutamine + H2O = L-glutamate + NH4(+). The enzyme catalyses UTP + NH4(+) + ATP = CTP + ADP + phosphate + 2 H(+). It functions in the pathway pyrimidine metabolism; CTP biosynthesis via de novo pathway; CTP from UDP: step 2/2. Allosterically activated by GTP, when glutamine is the substrate; GTP has no effect on the reaction when ammonia is the substrate. The allosteric effector GTP functions by stabilizing the protein conformation that binds the tetrahedral intermediate(s) formed during glutamine hydrolysis. Inhibited by the product CTP, via allosteric rather than competitive inhibition. In terms of biological role, catalyzes the ATP-dependent amination of UTP to CTP with either L-glutamine or ammonia as the source of nitrogen. Regulates intracellular CTP levels through interactions with the four ribonucleotide triphosphates. The sequence is that of CTP synthase from Streptococcus thermophilus (strain CNRZ 1066).